A 297-amino-acid chain; its full sequence is Homoserine kinase (297 aa).

An ATP-binding site is contributed by 82-92 (PVSRGLGSSAA).

Belongs to the GHMP kinase family. Homoserine kinase subfamily.

The protein localises to the cytoplasm. The enzyme catalyses L-homoserine + ATP = O-phospho-L-homoserine + ADP + H(+). Its pathway is amino-acid biosynthesis; L-threonine biosynthesis; L-threonine from L-aspartate: step 4/5. Catalyzes the ATP-dependent phosphorylation of L-homoserine to L-homoserine phosphate. This is Homoserine kinase from Clostridium botulinum (strain Kyoto / Type A2).